Here is a 198-residue protein sequence, read N- to C-terminus: Probable nicotinate-nucleotide adenylyltransferase (198 aa).

Belongs to the NadD family.

The catalysed reaction is nicotinate beta-D-ribonucleotide + ATP + H(+) = deamido-NAD(+) + diphosphate. Its pathway is cofactor biosynthesis; NAD(+) biosynthesis; deamido-NAD(+) from nicotinate D-ribonucleotide: step 1/1. Its function is as follows. Catalyzes the reversible adenylation of nicotinate mononucleotide (NaMN) to nicotinic acid adenine dinucleotide (NaAD). In Chlorobium limicola (strain DSM 245 / NBRC 103803 / 6330), this protein is Probable nicotinate-nucleotide adenylyltransferase.